Consider the following 153-residue polypeptide: 6,7-dimethyl-8-ribityllumazine synthase (153 aa).

Residues Phe-22, 56–58 (AFE), and 80–82 (TVI) contribute to the 5-amino-6-(D-ribitylamino)uracil site. 85–86 (AT) lines the (2S)-2-hydroxy-3-oxobutyl phosphate pocket. His-88 acts as the Proton donor in catalysis. A 5-amino-6-(D-ribitylamino)uracil-binding site is contributed by Phe-113. Arg-127 serves as a coordination point for (2S)-2-hydroxy-3-oxobutyl phosphate.

Belongs to the DMRL synthase family.

The enzyme catalyses (2S)-2-hydroxy-3-oxobutyl phosphate + 5-amino-6-(D-ribitylamino)uracil = 6,7-dimethyl-8-(1-D-ribityl)lumazine + phosphate + 2 H2O + H(+). It participates in cofactor biosynthesis; riboflavin biosynthesis; riboflavin from 2-hydroxy-3-oxobutyl phosphate and 5-amino-6-(D-ribitylamino)uracil: step 1/2. Functionally, catalyzes the formation of 6,7-dimethyl-8-ribityllumazine by condensation of 5-amino-6-(D-ribitylamino)uracil with 3,4-dihydroxy-2-butanone 4-phosphate. This is the penultimate step in the biosynthesis of riboflavin. This Clostridium perfringens (strain ATCC 13124 / DSM 756 / JCM 1290 / NCIMB 6125 / NCTC 8237 / Type A) protein is 6,7-dimethyl-8-ribityllumazine synthase.